The following is a 387-amino-acid chain: Flap endonuclease 1 (387 aa).

Residues 1-104 (MGILGLSKLI…GELAKRAERR (104 aa)) form an N-domain region. Residue Asp-34 participates in Mg(2+) binding. DNA is bound by residues Arg-47 and Arg-70. Residues Asp-86, Glu-158, Glu-160, Asp-179, and Asp-181 each contribute to the Mg(2+) site. Residues 122–253 (GIEKFNRRLV…KRAIELINNY (132 aa)) are I-domain. Glu-158 is a DNA binding site. DNA is bound by residues Gly-231 and Asp-233. Residue Asp-233 participates in Mg(2+) binding. Positions 336-344 (TQVRLDSFF) are interaction with PCNA. The tract at residues 345–387 (KTLPSTPNATNAAKRKAEEAKKSANNKKAKTSGGGGGRGRRPK) is disordered.

Belongs to the XPG/RAD2 endonuclease family. FEN1 subfamily. In terms of assembly, interacts with PCNA. Three molecules of FEN1 bind to one PCNA trimer with each molecule binding to one PCNA monomer. PCNA stimulates the nuclease activity without altering cleavage specificity. The cofactor is Mg(2+). Post-translationally, phosphorylated. Phosphorylation upon DNA damage induces relocalization to the nuclear plasma.

It is found in the nucleus. It localises to the nucleolus. Its subcellular location is the nucleoplasm. The protein localises to the mitochondrion. Structure-specific nuclease with 5'-flap endonuclease and 5'-3' exonuclease activities involved in DNA replication and repair. During DNA replication, cleaves the 5'-overhanging flap structure that is generated by displacement synthesis when DNA polymerase encounters the 5'-end of a downstream Okazaki fragment. It enters the flap from the 5'-end and then tracks to cleave the flap base, leaving a nick for ligation. Also involved in the long patch base excision repair (LP-BER) pathway, by cleaving within the apurinic/apyrimidinic (AP) site-terminated flap. Acts as a genome stabilization factor that prevents flaps from equilibrating into structures that lead to duplications and deletions. Also possesses 5'-3' exonuclease activity on nicked or gapped double-stranded DNA, and exhibits RNase H activity. Also involved in replication and repair of rDNA and in repairing mitochondrial DNA. The sequence is that of Flap endonuclease 1 from Drosophila yakuba (Fruit fly).